Consider the following 78-residue polypeptide: Acyl carrier protein (78 aa).

The Carrier domain maps to 2–77 (SNFEERVKKI…AAIDYVVSSA (76 aa)). An O-(pantetheine 4'-phosphoryl)serine modification is found at Ser-37.

The protein belongs to the acyl carrier protein (ACP) family. Post-translationally, 4'-phosphopantetheine is transferred from CoA to a specific serine of apo-ACP by AcpS. This modification is essential for activity because fatty acids are bound in thioester linkage to the sulfhydryl of the prosthetic group.

The protein localises to the cytoplasm. The protein operates within lipid metabolism; fatty acid biosynthesis. Its function is as follows. Carrier of the growing fatty acid chain in fatty acid biosynthesis. Is probably involved in the biosynthesis of docosahexaenoic acid (DHA) which is produced by this bacterium as a fatty acyl component in its membrane lipid. The chain is Acyl carrier protein from Moritella marina (Vibrio marinus).